A 354-amino-acid chain; its full sequence is AT-rich binding protein (354 aa).

A C2H2-type 1 zinc finger spans residues I31 to H54. Disordered stretches follow at residues L84–Q124 and E256–M276. Composition is skewed to basic and acidic residues over residues K89 to V100 and Q109 to Q124. Low complexity predominate over residues T264–M276. C2H2-type zinc fingers lie at residues Y285–H309 and F315–H338.

In terms of assembly, homooctamer. As to expression, fat body.

The protein resides in the nucleus. Its function is as follows. May be a transcription factor for genes having (A+T) stretches in their promoter and/or enhancer regions. Binds to AT rich DNA. This is AT-rich binding protein from Sarcophaga peregrina (Flesh fly).